Reading from the N-terminus, the 391-residue chain is 8-amino-7-oxononanoate synthase (391 aa).

Residue arginine 24 coordinates substrate. Glycine 112 to tyrosine 113 contacts pyridoxal 5'-phosphate. Histidine 137 is a substrate binding site. The pyridoxal 5'-phosphate site is built by serine 183, histidine 211, and threonine 240. Lysine 243 carries the N6-(pyridoxal phosphate)lysine modification. Substrate is bound at residue threonine 357.

It belongs to the class-II pyridoxal-phosphate-dependent aminotransferase family. BioF subfamily. In terms of assembly, homodimer. Requires pyridoxal 5'-phosphate as cofactor.

The enzyme catalyses 6-carboxyhexanoyl-[ACP] + L-alanine + H(+) = (8S)-8-amino-7-oxononanoate + holo-[ACP] + CO2. It functions in the pathway cofactor biosynthesis; biotin biosynthesis. Functionally, catalyzes the decarboxylative condensation of pimeloyl-[acyl-carrier protein] and L-alanine to produce 8-amino-7-oxononanoate (AON), [acyl-carrier protein], and carbon dioxide. This is 8-amino-7-oxononanoate synthase from Alkalilimnicola ehrlichii (strain ATCC BAA-1101 / DSM 17681 / MLHE-1).